Here is a 185-residue protein sequence, read N- to C-terminus: MASTSDIRNGVVLNINGQLNTVIEFQHVKPGKGGAFVRTKLKNILTGKVVDKTFNAGASVVLENVDRRDCTYLYRDADSFVFMDLADYDQIRLTASQVASAANYLSDNQKVVIATHNNAPLYVDLPPSVVLAVTHTEPGVQADRSTGGTKPATLETGYQIQVPLFITVGTRIRVDTRTGAYIGKA.

Belongs to the elongation factor P family.

It is found in the cytoplasm. The protein operates within protein biosynthesis; polypeptide chain elongation. Functionally, involved in peptide bond synthesis. Stimulates efficient translation and peptide-bond synthesis on native or reconstituted 70S ribosomes in vitro. Probably functions indirectly by altering the affinity of the ribosome for aminoacyl-tRNA, thus increasing their reactivity as acceptors for peptidyl transferase. The chain is Elongation factor P from Tropheryma whipplei (strain TW08/27) (Whipple's bacillus).